Reading from the N-terminus, the 473-residue chain is Glutathione reductase, mitochondrial (473 aa).

FAD-binding residues include S30 and G31. S30 is a binding site for glutathione. Residue R37 participates in glutathione binding. Residues E50, T57, C58, and K66 each contribute to the FAD site. Cysteines 58 and 63 form a disulfide. Residue Y114 participates in glutathione binding. An FAD-binding site is contributed by A130. A190, I193, E196, R213, R219, and G279 together coordinate NADP(+). D320 serves as a coordination point for FAD. L326 lines the NADP(+) pocket. T328 contacts FAD. R336 contacts glutathione. Residue V359 participates in NADP(+) binding. Residue H456 participates in FAD binding. The Proton acceptor role is filled by H456.

This sequence belongs to the class-I pyridine nucleotide-disulfide oxidoreductase family. The cofactor is FAD. Expressed at all larval stages and in adults in intestine, vulva muscle, pharynx and some cells in the tail.

Its subcellular location is the cytoplasm. The protein localises to the mitochondrion. The enzyme catalyses 2 glutathione + NADP(+) = glutathione disulfide + NADPH + H(+). Functionally, catalyzes the reduction of glutathione disulfide (GSSG) to reduced glutathione (GSH). Constitutes the major mechanism to maintain a high GSH:GSSG ratio in the cytosol. Involved in resistance to oxidative stress and starvation. Together with thioredoxin reductase txtr-1, required for the reduction of disulfide groups in the cuticle during molting. The sequence is that of Glutathione reductase, mitochondrial from Caenorhabditis elegans.